The chain runs to 238 residues: Uridylate kinase (238 aa).

12–15 lines the ATP pocket; sequence KLSG. Gly54 lines the UMP pocket. Positions 55 and 59 each coordinate ATP. UMP-binding positions include Asp74 and 135 to 142; that span reads TGNPFFTT. 3 residues coordinate ATP: Thr162, Tyr168, and Asp171.

Belongs to the UMP kinase family. Homohexamer.

Its subcellular location is the cytoplasm. It catalyses the reaction UMP + ATP = UDP + ADP. The protein operates within pyrimidine metabolism; CTP biosynthesis via de novo pathway; UDP from UMP (UMPK route): step 1/1. Inhibited by UTP. Its function is as follows. Catalyzes the reversible phosphorylation of UMP to UDP. In Azoarcus sp. (strain BH72), this protein is Uridylate kinase.